Reading from the N-terminus, the 62-residue chain is E3 SUMO-protein ligase EGR2 (62 aa).

3 consecutive C2H2-type zinc fingers follow at residues alanine 1 to histidine 21, phenylalanine 27 to histidine 49, and phenylalanine 55 to arginine 62.

This sequence belongs to the EGR C2H2-type zinc-finger protein family. As to quaternary structure, interacts with HCFC1. Interacts with WWP2. Interacts with UBC9. Interacts with CITED1. Interacts (via phosphorylated form) with SFN. In terms of processing, ubiquitinated by WWP2 leading to proteasomal degradation. Acetylated. May be deacetylated by HDAC6, HDAC10 or SIRT1.

The protein resides in the nucleus. The protein operates within protein modification; protein sumoylation. In terms of biological role, sequence-specific DNA-binding transcription factor. Plays a role in hindbrain segmentation by regulating the expression of a subset of homeobox containing genes and in Schwann cell myelination by regulating the expression of genes involved in the formation and maintenance of myelin. Binds to two EGR2-consensus sites EGR2A (5'-CTGTAGGAG-3') and EGR2B (5'-ATGTAGGTG-3') in the HOXB3 enhancer and promotes HOXB3 transcriptional activation. Binds to specific DNA sites located in the promoter region of HOXA4, HOXB2 and ERBB2. Regulates hindbrain segmentation by controlling the expression of Hox genes, such as HOXA4, HOXB3 and HOXB2, and thereby specifying odd and even rhombomeres. Promotes the expression of HOXB3 in the rhombomere r5 in the hindbrain. Regulates myelination in the peripheral nervous system after birth, possibly by regulating the expression of myelin proteins, such as MPZ, and by promoting the differentiation of Schwann cells. Involved in the development of the jaw openener musculature, probably by playing a role in its innervation through trigeminal motor neurons. May play a role in adipogenesis, possibly by regulating the expression of CEBPB. Functionally, E3 SUMO-protein ligase helping SUMO1 conjugation to its coregulators NAB1 and NAB2, whose sumoylation down-regulates EGR2 transcriptional activity. The chain is E3 SUMO-protein ligase EGR2 (EGR2) from Cerdocyon thous (Crab-eating fox).